The sequence spans 86 residues: UPF0297 protein LCABL_08470 (86 aa).

It belongs to the UPF0297 family.

In Lacticaseibacillus casei (strain BL23) (Lactobacillus casei), this protein is UPF0297 protein LCABL_08470.